Here is a 220-residue protein sequence, read N- to C-terminus: Splicing factor U2AF 26 kDa subunit (220 aa).

Residue A2 is modified to N-acetylalanine. The C3H1-type 1 zinc finger occupies 12-40; that stretch reads EKDKVNCSFYFKIGACRHGDRCSRLHNKP. Positions 65-147 constitute an RRM domain; that stretch reads SHCHVSDVEV…QAVHAELSPV (83 aa). The C3H1-type 2 zinc finger occupies 149–176; sequence DFRESCCRQYEMGECTRGGFCNFMHLRP. The segment at 186–220 is disordered; that stretch reads YGRGPRHRSPPRSHTGHRPRERNRRRSPDHRHGRF. Residues 189–220 are compositionally biased toward basic residues; sequence GPRHRSPPRSHTGHRPRERNRRRSPDHRHGRF.

This sequence belongs to the splicing factor SR family. In terms of assembly, interacts with GFI1, U2AF2 and C1QBP. Isoform 3 interacts with PER1. Post-translationally, isoform 3 is rapidly degraded by a proteasome-mediated degradation pathway. In terms of tissue distribution, ubiquitous. Highly expressed in the brain.

It localises to the nucleus. The protein resides in the nucleus speckle. The protein localises to the cytoplasm. Functionally, RNA-binding protein that function as a pre-mRNA splicing factor. Plays a critical role in both constitutive and enhancer-dependent splicing by mediating protein-protein interactions and protein-RNA interactions required for accurate 3'-splice site selection. It can functionally substitute for U2AF1 in constitutive splicing and enhancer-dependent splicing. Acts by enhancing the binding of U2AF2 to weak pyrimidine tracts. Also participates in the regulation of alternative pre-mRNA splicing. Activates exon 5 skipping of PTPRC during T-cell activation; an event reversed by GFI1. Binds to RNA at the AG dinucleotide at the 3'-splice site. Shows a preference for AGC or AGA. Alternative splicing of U2AF1L4 may play a role in connecting the circadian rhythm to changing external cues: may provide a circadian buffering system in central and periphery clocks that allows synchronized adaption to clock-resetting stimuli in order to prevent potentially pathogenic desynchronization. The protein is Splicing factor U2AF 26 kDa subunit (U2af1l4) of Mus musculus (Mouse).